The following is a 328-amino-acid chain: Complex I intermediate-associated protein 30, mitochondrial (328 aa).

Residues 1 to 24 (MSSIHKLLTGIYIHKNFLRPRAAL) constitute a mitochondrion transit peptide. Residues 44–54 (VTSVDRASQQG) show a composition bias toward polar residues. Residues 44–80 (VTSVDRASQQGKTEEGLQGHDHKEVALDAPSPDRTPE) form a disordered region. The segment covering 55 to 69 (KTEEGLQGHDHKEVA) has biased composition (basic and acidic residues). Residue serine 319 is modified to Phosphoserine.

It belongs to the CIA30 family. In terms of assembly, part of the mitochondrial complex I assembly/MCIA complex that comprises at least the core subunits TMEM126B, NDUFAF1, ECSIT and ACAD9 and complement subunits such as COA1 and TMEM186. Interacts with ECSIT. Interacts with ACAD9. At early stages of complex I assembly, it is found in intermediate subcomplexes that contain different subunits including NDUFB6, NDUFA6, NDUFA9, NDUFS3, NDUFS7, ND1, ND2 and ND3. Interacts with TMEM70 and TMEM242.

It localises to the mitochondrion. The protein resides in the mitochondrion matrix. Functionally, as part of the MCIA complex, involved in the assembly of the mitochondrial complex I. The sequence is that of Complex I intermediate-associated protein 30, mitochondrial from Mus musculus (Mouse).